The sequence spans 319 residues: Triacylglycerol lipase (319 aa).

The 279-residue stretch at 10 to 288 folds into the AB hydrolase-1 domain; that stretch reads PVILVHGLAG…TSYHWNHLDE (279 aa). Leu17 is a binding site for substrate. Residue Ser87 is the Nucleophile of the active site. Substrate is bound at residue Gln88. Cysteines 190 and 269 form a disulfide. Residue Asp241 participates in Ca(2+) binding. Catalysis depends on charge relay system residues Asp263 and His285. Residues Asp287, Gln291, and Val295 each coordinate Ca(2+).

Belongs to the AB hydrolase superfamily. Pseudomonas lipase family. As to quaternary structure, monomer. Interacts with lipase-specific foldase Lif. Ca(2+) is required as a cofactor.

The protein resides in the secreted. The enzyme catalyses a triacylglycerol + H2O = a diacylglycerol + a fatty acid + H(+). In terms of biological role, catalyzes the hydrolysis of triacylglycerol. In Pseudarthrobacter phenanthrenivorans (Arthrobacter phenanthrenivorans), this protein is Triacylglycerol lipase.